A 79-amino-acid polypeptide reads, in one-letter code: Acyl carrier protein (79 aa).

The 76-residue stretch at 2–77 folds into the Carrier domain; that stretch reads SEIGERVKKI…DAVKFLEKNA (76 aa). An O-(pantetheine 4'-phosphoryl)serine modification is found at Ser37.

The protein belongs to the acyl carrier protein (ACP) family. Post-translationally, 4'-phosphopantetheine is transferred from CoA to a specific serine of apo-ACP by AcpS. This modification is essential for activity because fatty acids are bound in thioester linkage to the sulfhydryl of the prosthetic group.

The protein localises to the cytoplasm. Its pathway is lipid metabolism; fatty acid biosynthesis. Its function is as follows. Carrier of the growing fatty acid chain in fatty acid biosynthesis. In Rhodopseudomonas palustris (strain BisA53), this protein is Acyl carrier protein.